We begin with the raw amino-acid sequence, 391 residues long: Succinyl-diaminopimelate desuccinylase (391 aa).

Histidine 78 lines the Zn(2+) pocket. Aspartate 80 is a catalytic residue. Aspartate 111 is a Zn(2+) binding site. Residue glutamate 145 is the Proton acceptor of the active site. 3 residues coordinate Zn(2+): glutamate 146, glutamate 174, and histidine 360.

This sequence belongs to the peptidase M20A family. DapE subfamily. In terms of assembly, homodimer. It depends on Zn(2+) as a cofactor. Requires Co(2+) as cofactor.

It catalyses the reaction N-succinyl-(2S,6S)-2,6-diaminopimelate + H2O = (2S,6S)-2,6-diaminopimelate + succinate. Its pathway is amino-acid biosynthesis; L-lysine biosynthesis via DAP pathway; LL-2,6-diaminopimelate from (S)-tetrahydrodipicolinate (succinylase route): step 3/3. Functionally, catalyzes the hydrolysis of N-succinyl-L,L-diaminopimelic acid (SDAP), forming succinate and LL-2,6-diaminopimelate (DAP), an intermediate involved in the bacterial biosynthesis of lysine and meso-diaminopimelic acid, an essential component of bacterial cell walls. The protein is Succinyl-diaminopimelate desuccinylase of Albidiferax ferrireducens (strain ATCC BAA-621 / DSM 15236 / T118) (Rhodoferax ferrireducens).